A 226-amino-acid polypeptide reads, in one-letter code: Large ribosomal subunit protein uL1 (226 aa).

This sequence belongs to the universal ribosomal protein uL1 family. Part of the 50S ribosomal subunit.

Binds directly to 23S rRNA. The L1 stalk is quite mobile in the ribosome, and is involved in E site tRNA release. Functionally, protein L1 is also a translational repressor protein, it controls the translation of the L11 operon by binding to its mRNA. This Mycoplasma mycoides subsp. mycoides SC (strain CCUG 32753 / NCTC 10114 / PG1) protein is Large ribosomal subunit protein uL1.